Here is a 150-residue protein sequence, read N- to C-terminus: Large ribosomal subunit protein uL13 (150 aa).

The protein belongs to the universal ribosomal protein uL13 family. In terms of assembly, part of the 50S ribosomal subunit.

Its function is as follows. This protein is one of the early assembly proteins of the 50S ribosomal subunit, although it is not seen to bind rRNA by itself. It is important during the early stages of 50S assembly. In Chlorobaculum parvum (strain DSM 263 / NCIMB 8327) (Chlorobium vibrioforme subsp. thiosulfatophilum), this protein is Large ribosomal subunit protein uL13.